The following is a 220-amino-acid chain: N-(5'-phosphoribosyl)anthranilate isomerase (220 aa).

It belongs to the TrpF family.

It carries out the reaction N-(5-phospho-beta-D-ribosyl)anthranilate = 1-(2-carboxyphenylamino)-1-deoxy-D-ribulose 5-phosphate. It functions in the pathway amino-acid biosynthesis; L-tryptophan biosynthesis; L-tryptophan from chorismate: step 3/5. The polypeptide is N-(5'-phosphoribosyl)anthranilate isomerase (Xylella fastidiosa (strain M23)).